The sequence spans 212 residues: Disintegrin-like halysetin (212 aa).

The Disintegrin domain maps to 4–90; it reads PPVCGNELLE…ECPADVFHKN (87 aa). 9 cysteine pairs are disulfide-bonded: Cys7/Cys26, Cys18/Cys36, Cys62/Cys82, Cys69/Cys94, Cys101/Cys106, Cys113/Cys128, Cys151/Cys158, Cys163/Cys174, and Cys200/Cys205. The D/ECD-tripeptide motif lies at 68-70; the sequence is ECD.

The protein belongs to the venom metalloproteinase (M12B) family. P-III subfamily. P-IIIb sub-subfamily. In terms of assembly, monomer. Expressed by the venom gland.

It localises to the secreted. Functionally, inhibits human platelet aggregation stimulated by collagen with an IC(50) of 420 nM. The protein is Disintegrin-like halysetin of Gloydius halys (Chinese water mocassin).